Consider the following 323-residue polypeptide: o-succinylbenzoate synthase (323 aa).

The Proton donor role is filled by Lys134. Mg(2+) is bound by residues Asp162, Glu191, and Asp214. The active-site Proton acceptor is the Lys236.

Belongs to the mandelate racemase/muconate lactonizing enzyme family. MenC type 1 subfamily. A divalent metal cation serves as cofactor.

It carries out the reaction (1R,6R)-6-hydroxy-2-succinyl-cyclohexa-2,4-diene-1-carboxylate = 2-succinylbenzoate + H2O. Its pathway is quinol/quinone metabolism; 1,4-dihydroxy-2-naphthoate biosynthesis; 1,4-dihydroxy-2-naphthoate from chorismate: step 4/7. The protein operates within quinol/quinone metabolism; menaquinone biosynthesis. In terms of biological role, converts 2-succinyl-6-hydroxy-2,4-cyclohexadiene-1-carboxylate (SHCHC) to 2-succinylbenzoate (OSB). This chain is o-succinylbenzoate synthase, found in Photorhabdus laumondii subsp. laumondii (strain DSM 15139 / CIP 105565 / TT01) (Photorhabdus luminescens subsp. laumondii).